Reading from the N-terminus, the 309-residue chain is UDP-N-acetylenolpyruvoylglucosamine reductase (309 aa).

In terms of domain architecture, FAD-binding PCMH-type spans R24–G187. R167 is a catalytic residue. Positions L200 to S213 are enriched in basic and acidic residues. Residues L200 to S230 are disordered. Over residues A214–G228 the composition is skewed to polar residues. Catalysis depends on S216, which acts as the Proton donor. E298 is an active-site residue.

The protein belongs to the MurB family. Requires FAD as cofactor.

The protein resides in the cytoplasm. It catalyses the reaction UDP-N-acetyl-alpha-D-muramate + NADP(+) = UDP-N-acetyl-3-O-(1-carboxyvinyl)-alpha-D-glucosamine + NADPH + H(+). Its pathway is cell wall biogenesis; peptidoglycan biosynthesis. Functionally, cell wall formation. The polypeptide is UDP-N-acetylenolpyruvoylglucosamine reductase (Roseobacter denitrificans (strain ATCC 33942 / OCh 114) (Erythrobacter sp. (strain OCh 114))).